Consider the following 314-residue polypeptide: 2,3-dihydroxyphenylpropionate/2,3-dihydroxicinnamic acid 1,2-dioxygenase 1 (314 aa).

The active-site Proton donor is His115. His179 acts as the Proton acceptor in catalysis.

The protein belongs to the LigB/MhpB extradiol dioxygenase family. In terms of assembly, homotetramer. Fe(2+) is required as a cofactor.

The catalysed reaction is 3-(2,3-dihydroxyphenyl)propanoate + O2 = (2Z,4E)-2-hydroxy-6-oxonona-2,4-dienedioate + H(+). It catalyses the reaction (2E)-3-(2,3-dihydroxyphenyl)prop-2-enoate + O2 = (2Z,4E,7E)-2-hydroxy-6-oxonona-2,4,7-trienedioate + H(+). Its pathway is aromatic compound metabolism; 3-phenylpropanoate degradation. Catalyzes the non-heme iron(II)-dependent oxidative cleavage of 2,3-dihydroxyphenylpropionic acid and 2,3-dihydroxicinnamic acid into 2-hydroxy-6-ketononadienedioate and 2-hydroxy-6-ketononatrienedioate, respectively. This chain is 2,3-dihydroxyphenylpropionate/2,3-dihydroxicinnamic acid 1,2-dioxygenase 1, found in Pseudomonas putida (Arthrobacter siderocapsulatus).